The following is a 253-amino-acid chain: Phosphate import ATP-binding protein PstB 1 (253 aa).

In terms of domain architecture, ABC transporter spans 7-248 (LQIRDLSVYY…PKRKETEDYI (242 aa)). Position 39–46 (39–46 (GPSGSGKS)) interacts with ATP.

This sequence belongs to the ABC transporter superfamily. Phosphate importer (TC 3.A.1.7) family. The complex is composed of two ATP-binding proteins (PstB), two transmembrane proteins (PstC and PstA) and a solute-binding protein (PstS).

It localises to the cell membrane. It catalyses the reaction phosphate(out) + ATP + H2O = ADP + 2 phosphate(in) + H(+). Its function is as follows. Part of the ABC transporter complex PstSACB involved in phosphate import. Responsible for energy coupling to the transport system. This is Phosphate import ATP-binding protein PstB 1 from Streptococcus pyogenes serotype M12 (strain MGAS9429).